Here is a 319-residue protein sequence, read N- to C-terminus: 8-methylmenaquinol:fumarate reductase iron-sulfur subunit (319 aa).

In terms of domain architecture, 2Fe-2S ferredoxin-type spans 1-96 (MKFIIDRFDG…TFRISPLGNH (96 aa)). 4 residues coordinate [2Fe-2S] cluster: Cys51, Cys56, Cys59, and Cys71. 2 consecutive 4Fe-4S ferredoxin-type domains span residues 139-168 (FDRIIKQWDCILCGSCVSECNKFSADQSDY) and 193-224 (VKPAVANGLWNCVHCHECTNRCPKHISAAEDI). [4Fe-4S] cluster contacts are provided by Cys148, Cys151, Cys154, Cys158, Cys204, Cys207, Cys210, and Cys214.

The protein belongs to the succinate dehydrogenase/fumarate reductase iron-sulfur protein family. As to quaternary structure, the MFR complex is composed of three subunits: a flavoprotein (SdhA), an iron-sulfur protein (SdhB), and one hydrophobic anchor protein (SdhE). It depends on [2Fe-2S] cluster as a cofactor. Requires [4Fe-4S] cluster as cofactor.

The protein resides in the periplasm. Its subcellular location is the cell membrane. The enzyme catalyses 8-methylmenaquinone-6 + succinate = 8-methylmenaquinol-6 + fumarate. Functionally, iron-sulfur subunit of 8-methylmenaquinol:fumarate reductase (MFR), that catalyzes the reduction of fumarate using 8-methylmenaquinol-6 as electron donor. The complex shows no succinate oxidation activity. Is involved in anaerobic metabolism. The protein is 8-methylmenaquinol:fumarate reductase iron-sulfur subunit of Wolinella succinogenes (strain ATCC 29543 / DSM 1740 / CCUG 13145 / JCM 31913 / LMG 7466 / NCTC 11488 / FDC 602W) (Vibrio succinogenes).